The sequence spans 372 residues: DNA-directed RNA polymerase subunit alpha (372 aa).

Residues 1–268 (MIFDEDSNSI…DQFQPFINFD (268 aa)) are alpha N-terminal domain (alpha-NTD). Residues 280 to 372 (KDTLPYDSNL…ESLSKQYSEE (93 aa)) are alpha C-terminal domain (alpha-CTD).

The protein belongs to the RNA polymerase alpha chain family. In terms of assembly, homodimer. The RNAP catalytic core consists of 2 alpha, 1 beta, 1 beta' and 1 omega subunit. When a sigma factor is associated with the core the holoenzyme is formed, which can initiate transcription.

The catalysed reaction is RNA(n) + a ribonucleoside 5'-triphosphate = RNA(n+1) + diphosphate. DNA-dependent RNA polymerase catalyzes the transcription of DNA into RNA using the four ribonucleoside triphosphates as substrates. This is DNA-directed RNA polymerase subunit alpha from Ehrlichia chaffeensis (strain ATCC CRL-10679 / Arkansas).